The chain runs to 79 residues: Large ribosomal subunit protein bL31 (79 aa).

Zn(2+) contacts are provided by cysteine 16, cysteine 18, cysteine 37, and cysteine 40.

Belongs to the bacterial ribosomal protein bL31 family. Type A subfamily. In terms of assembly, part of the 50S ribosomal subunit. It depends on Zn(2+) as a cofactor.

Functionally, binds the 23S rRNA. This is Large ribosomal subunit protein bL31 from Coxiella burnetii (strain CbuG_Q212) (Coxiella burnetii (strain Q212)).